The primary structure comprises 469 residues: 3-isopropylmalate dehydratase large subunit (469 aa).

[4Fe-4S] cluster contacts are provided by C350, C410, and C413.

This sequence belongs to the aconitase/IPM isomerase family. LeuC type 1 subfamily. Heterodimer of LeuC and LeuD. Requires [4Fe-4S] cluster as cofactor.

It catalyses the reaction (2R,3S)-3-isopropylmalate = (2S)-2-isopropylmalate. The protein operates within amino-acid biosynthesis; L-leucine biosynthesis; L-leucine from 3-methyl-2-oxobutanoate: step 2/4. Catalyzes the isomerization between 2-isopropylmalate and 3-isopropylmalate, via the formation of 2-isopropylmaleate. This is 3-isopropylmalate dehydratase large subunit from Rhizobium rhizogenes (strain K84 / ATCC BAA-868) (Agrobacterium radiobacter).